A 266-amino-acid chain; its full sequence is MHLEITDLNRVFVGKRGSVVALKNINMHIETGEFVCAVGASGSGKSTLLRLIAGLDTPTSGTINVDGQRVTGPGADRGMVFQHYSLFPWMTVRQNVEFGLKLQGCSQKERFDTASYYLDVVGLINFSEAYPRELSGGMKQRVAIARSLACHPKVLLMDEPFGALDIQTKERMHEYLIDIWQRLQCSILMITHDVEEAVFLAQRVYVLSSRPGTIQRELTINLPGDEETPKNRTYKIKREPEFFKYSDEISSLLRGRETEETEAIAS.

An ABC transporter domain is found at 3–234 (LEITDLNRVF…DEETPKNRTY (232 aa)). ATP is bound at residue 39–46 (GASGSGKS).

This sequence belongs to the ABC transporter superfamily. Nitrate/nitrite/cyanate uptake transporter (NitT) (TC 3.A.1.16) family. In terms of assembly, the complex is composed of two ATP-binding proteins (NrtC and NrtD), two transmembrane proteins (NrtB) and a solute-binding protein (NrtA).

It localises to the cell inner membrane. It catalyses the reaction nitrate(out) + ATP + H2O = nitrate(in) + ADP + phosphate + H(+). Its function is as follows. Part of the ABC transporter complex NrtABCD involved in nitrate uptake. The complex is probably also involved in nitrite transport. Probably responsible for energy coupling to the transport system. The sequence is that of Nitrate import ATP-binding protein NrtD (nrtD) from Synechocystis sp. (strain ATCC 27184 / PCC 6803 / Kazusa).